The sequence spans 94 residues: Neurotoxin 213 (94 aa).

A signal peptide spans 1 to 22 (MLKFILTCTSVILFTAVEDSSC). Residues 24-88 (KGGNYPISVY…YWDYHRNNCK (65 aa)) enclose the LCN-type CS-alpha/beta domain. Cystine bridges form between Cys-39-Cys-62, Cys-48-Cys-67, and Cys-52-Cys-69.

This sequence belongs to the long (3 C-C) scorpion toxin superfamily. Expressed by the venom gland.

The protein localises to the secreted. The sequence is that of Neurotoxin 213 from Lychas mucronatus (Chinese swimming scorpion).